The primary structure comprises 270 residues: 4-hydroxy-4-methyl-2-oxoglutarate aldolase tasA (270 aa).

Histidine 49 functions as the Proton acceptor in the catalytic mechanism. Residues glutamate 156 and aspartate 182 each contribute to the a divalent metal cation site. Aspartate 182 serves as a coordination point for substrate.

This sequence belongs to the HpcH/HpaI aldolase family. Homohexamer; trimer of dimers. Co(2+) serves as cofactor. Requires Mn(2+) as cofactor. It depends on Zn(2+) as a cofactor. The cofactor is Fe(2+). Mg(2+) is required as a cofactor.

The enzyme catalyses 4-hydroxy-4-methyl-2-oxoglutarate = 2 pyruvate. The protein operates within secondary metabolite biosynthesis. In terms of biological role, 4-hydroxy-4-methyl-2-oxoglutarate aldolase; part of the gene cluster that mediates the biosynthesis of the tetramic acids Sch210971 and Sch210972, potential anti-HIV fungal natural product that contain a decalin core. The PKS module of tasS together with the enoylreductase tasC catalyze the formation of the polyketide unit which is then conjugated to 4-hydroxyl-4-methyl glutamate (HMG) by the condensation domain of the tasS NRPS module. One unique structural feature of Sch210971 and Sch210972 is the tetramic acid motif proposed to be derived from the non-proteinogenic amino acid HMG, by a Dieckmann-type condensation catalyzed by the reductase domain of tasS. The aldolase tasA catalyzes the aldol condensation of 2 molecules of pyruvic acid to yield the intermediate 4-hydroxyl-4-methyl-2-oxoglutarate (HMOG), which can then be stereoselectively transaminated, may be by tasG, to form HMG. The Diels-Alderase tas3 then uses the Dieckmann product of tasS as substrate and catalyzes the Diels-Alder cycloaddition to form the decalin ring of Sch210971 and Sch210972. The protein is 4-hydroxy-4-methyl-2-oxoglutarate aldolase tasA of Hapsidospora irregularis.